The sequence spans 370 residues: Anhydro-N-acetylmuramic acid kinase (370 aa).

ATP is bound at residue 12–19; sequence GTSLDGVD.

It belongs to the anhydro-N-acetylmuramic acid kinase family.

The catalysed reaction is 1,6-anhydro-N-acetyl-beta-muramate + ATP + H2O = N-acetyl-D-muramate 6-phosphate + ADP + H(+). Its pathway is amino-sugar metabolism; 1,6-anhydro-N-acetylmuramate degradation. It participates in cell wall biogenesis; peptidoglycan recycling. Its function is as follows. Catalyzes the specific phosphorylation of 1,6-anhydro-N-acetylmuramic acid (anhMurNAc) with the simultaneous cleavage of the 1,6-anhydro ring, generating MurNAc-6-P. Is required for the utilization of anhMurNAc either imported from the medium or derived from its own cell wall murein, and thus plays a role in cell wall recycling. This is Anhydro-N-acetylmuramic acid kinase from Pectobacterium atrosepticum (strain SCRI 1043 / ATCC BAA-672) (Erwinia carotovora subsp. atroseptica).